Reading from the N-terminus, the 611-residue chain is Chaperone protein DnaK (611 aa).

Thr-173 carries the post-translational modification Phosphothreonine; by autocatalysis. Low complexity predominate over residues 579–592 (AAGQAEGAQGAQDA). Residues 579–598 (AAGQAEGAQGAQDAGAKKDN) form a disordered region.

Belongs to the heat shock protein 70 family.

Functionally, acts as a chaperone. The chain is Chaperone protein DnaK from Bacillus cereus (strain B4264).